The sequence spans 425 residues: MSTKWEKLEGNVGVLTIEVDAKEVNNSIDAAFKKVVKTINVPGFRKGKMPRPLFEQRFGIESLYQDALDIILPKAYGEAIDEAGIFPVAHPEIDIEKFEKGQNLIFTAKVTVKPEVKLGDYKGLAVEKVETTVTDEDVENEVKALQERQAELVVKEDGTAADGDTAVIDFEGFVDGEAFEGGKGENYSLAIGSGTFIPGFEEQVIGLKSGDSKEVEVSFPEEYHAAELAGKPATFKVTIHEIKTKELPELNDEFAKDADEEVATLDELKTKLRTNLEEGKKHEAEHKVRDEVVELAAANAEIDIPEAMIDTELDRMVREFEQRLSQQGMNLELYYQFTGTDADKLKEQMKEDAQKRVRINLVLEAIIEAENIEVTEEEVTAEVEKMAEMYGMPVDAIKQALGSVDALSEDLKVRKAVDFLVDNAA.

Residues 163–248 (GDTAVIDFEG…IHEIKTKELP (86 aa)) enclose the PPIase FKBP-type domain.

It belongs to the FKBP-type PPIase family. Tig subfamily.

Its subcellular location is the cytoplasm. The enzyme catalyses [protein]-peptidylproline (omega=180) = [protein]-peptidylproline (omega=0). Involved in protein export. Acts as a chaperone by maintaining the newly synthesized protein in an open conformation. Functions as a peptidyl-prolyl cis-trans isomerase. The chain is Trigger factor from Bacillus mycoides (strain KBAB4) (Bacillus weihenstephanensis).